We begin with the raw amino-acid sequence, 380 residues long: Cytochrome b (380 aa).

4 helical membrane passes run 34–54 (FGSL…LLAM), 78–99 (WLIR…FLHI), 114–134 (WNTG…GYVL), and 179–199 (FFAL…THLM). The heme b site is built by His-84 and His-98. Residues His-183 and His-197 each contribute to the heme b site. His-202 is a binding site for a ubiquinone. Transmembrane regions (helical) follow at residues 227-247 (LKDI…ALFS), 289-309 (LGGV…PFLH), 321-341 (LSQA…WVGS), and 348-368 (FIII…ILFP).

The protein belongs to the cytochrome b family. As to quaternary structure, the cytochrome bc1 complex contains 11 subunits: 3 respiratory subunits (MT-CYB, CYC1 and UQCRFS1), 2 core proteins (UQCRC1 and UQCRC2) and 6 low-molecular weight proteins (UQCRH/QCR6, UQCRB/QCR7, UQCRQ/QCR8, UQCR10/QCR9, UQCR11/QCR10 and a cleavage product of UQCRFS1). This cytochrome bc1 complex then forms a dimer. Requires heme b as cofactor.

Its subcellular location is the mitochondrion inner membrane. Its function is as follows. Component of the ubiquinol-cytochrome c reductase complex (complex III or cytochrome b-c1 complex) that is part of the mitochondrial respiratory chain. The b-c1 complex mediates electron transfer from ubiquinol to cytochrome c. Contributes to the generation of a proton gradient across the mitochondrial membrane that is then used for ATP synthesis. This is Cytochrome b (MT-CYB) from Syrmaticus reevesii (Reeves's pheasant).